We begin with the raw amino-acid sequence, 263 residues long: Leukocyte-associated immunoglobulin-like receptor 1 (263 aa).

A signal peptide spans 1 to 21 (MSLHPVILLVLVLCLGWKINT). Residues 22-144 (QEGSLPDITI…TSWLKTYSIY (123 aa)) lie on the Extracellular side of the membrane. One can recognise an Ig-like C2-type domain in the interval 27–115 (PDITIFPNSS…TWSERSKTLE (89 aa)). Asn34 and Asn90 each carry an N-linked (GlcNAc...) asparagine glycan. A disulfide bridge links Cys49 with Cys99. A helical transmembrane segment spans residues 145–165 (IFTVVSVIFLLCLSALLFCFL). Residues 166–263 (RHRQKKQGLP…SSTYAAIIRH (98 aa)) are Cytoplasmic-facing. 2 short sequence motifs (ITIM motif) span residues 226-231 (VTYIQL) and 255-260 (STYAAI). Phosphotyrosine occurs at positions 228 and 257.

In terms of assembly, interacts with SH2 domains of tyrosine-protein phosphatases PTPN6 and PTPN11. The interaction with PTPN6 is constitutive. Interacts with the SH2 domain of CSK. Binds with high affinity to extracellular matrix collagens, the interaction is functionally important. Phosphorylation at Tyr-228 and Tyr-257 activates it. May be phosphorylated by LCK. Post-translationally, N-glycosylated. Expressed in lymphoid organs and in cell lines of hemopoietic origin.

It is found in the cell membrane. Its function is as follows. Functions as an inhibitory receptor that plays a constitutive negative regulatory role on cytolytic function of natural killer (NK) cells, B-cells and T-cells. Activation by Tyr phosphorylation results in recruitment and activation of the phosphatases PTPN6 and PTPN11. It also reduces the increase of intracellular calcium evoked by B-cell receptor ligation. May also play its inhibitory role independently of SH2-containing phosphatases. Modulates cytokine production in CD4+ T-cells, down-regulating IL2 and IFNG production while inducing secretion of transforming growth factor beta. Also down-regulates IgG and IgE production in B-cells as well as IL8, IL10 and TNF secretion. Inhibits proliferation and induces apoptosis in myeloid leukemia cell lines as well as prevents nuclear translocation of NF-kappa-B p65 subunit/RELA and phosphorylation of I-kappa-B alpha/CHUK in these cells. Inhibits the differentiation of peripheral blood precursors towards dendritic cells. In Mus musculus (Mouse), this protein is Leukocyte-associated immunoglobulin-like receptor 1 (Lair1).